The following is a 117-amino-acid chain: Immunoglobulin heavy variable 4-38-2 (117 aa).

The signal sequence occupies residues 1–19 (MKHLWFFLLLVAAPRWVLS). Residues 20-44 (QVQLQESGPGLVKPSETLSLTCTVS) form a framework-1 region. Residues 20–117 (QVQLQESGPG…ADTAVYYCAR (98 aa)) enclose the Ig-like domain. Cys-41 and Cys-115 are oxidised to a cystine. Residues 45 to 53 (GYSISSGYY) form a complementarity-determining-1 region. Positions 54 to 70 (WGWIRQPPGKGLEWIGS) are framework-2. Residues 71–77 (IYHSGST) form a complementarity-determining-2 region. A framework-3 region spans residues 78-115 (YYNPSLKSRVTISVDTSKNQFSLKLSSVTAADTAVYYC). Residues 116–117 (AR) are complementarity-determining-3.

In terms of assembly, immunoglobulins are composed of two identical heavy chains and two identical light chains; disulfide-linked.

It is found in the secreted. Its subcellular location is the cell membrane. Its function is as follows. V region of the variable domain of immunoglobulin heavy chains that participates in the antigen recognition. Immunoglobulins, also known as antibodies, are membrane-bound or secreted glycoproteins produced by B lymphocytes. In the recognition phase of humoral immunity, the membrane-bound immunoglobulins serve as receptors which, upon binding of a specific antigen, trigger the clonal expansion and differentiation of B lymphocytes into immunoglobulins-secreting plasma cells. Secreted immunoglobulins mediate the effector phase of humoral immunity, which results in the elimination of bound antigens. The antigen binding site is formed by the variable domain of one heavy chain, together with that of its associated light chain. Thus, each immunoglobulin has two antigen binding sites with remarkable affinity for a particular antigen. The variable domains are assembled by a process called V-(D)-J rearrangement and can then be subjected to somatic hypermutations which, after exposure to antigen and selection, allow affinity maturation for a particular antigen. In Homo sapiens (Human), this protein is Immunoglobulin heavy variable 4-38-2.